We begin with the raw amino-acid sequence, 894 residues long: Probable cytoplasmic aconitate hydratase (894 aa).

Residues Q87 and 207-209 (DSH) contribute to the substrate site. [4Fe-4S] cluster contacts are provided by C438, C504, and C507. Substrate-binding positions include R537, R542, and 781–782 (SR).

This sequence belongs to the aconitase/IPM isomerase family. [4Fe-4S] cluster is required as a cofactor.

It is found in the cytoplasm. The protein localises to the cytosol. The catalysed reaction is citrate = D-threo-isocitrate. Its function is as follows. Catalyzes the isomerization of citrate to isocitrate via cis-aconitate. The protein is Probable cytoplasmic aconitate hydratase (aco1) of Dictyostelium discoideum (Social amoeba).